The following is a 428-amino-acid chain: Histidinol dehydrogenase (428 aa).

The substrate site is built by Ser232, Gln254, and His257. Zn(2+) is bound by residues Gln254 and His257. Catalysis depends on proton acceptor residues Glu324 and His325. 4 residues coordinate substrate: His325, Asp358, Glu412, and His417. Asp358 serves as a coordination point for Zn(2+). His417 contacts Zn(2+).

This sequence belongs to the histidinol dehydrogenase family. The cofactor is Zn(2+).

The enzyme catalyses L-histidinol + 2 NAD(+) + H2O = L-histidine + 2 NADH + 3 H(+). The protein operates within amino-acid biosynthesis; L-histidine biosynthesis; L-histidine from 5-phospho-alpha-D-ribose 1-diphosphate: step 9/9. In terms of biological role, catalyzes the sequential NAD-dependent oxidations of L-histidinol to L-histidinaldehyde and then to L-histidine. In Thermotoga maritima (strain ATCC 43589 / DSM 3109 / JCM 10099 / NBRC 100826 / MSB8), this protein is Histidinol dehydrogenase.